The chain runs to 308 residues: Methionyl-tRNA formyltransferase (308 aa).

Residue 109–112 (SLLP) coordinates (6S)-5,6,7,8-tetrahydrofolate.

It belongs to the Fmt family.

The enzyme catalyses L-methionyl-tRNA(fMet) + (6R)-10-formyltetrahydrofolate = N-formyl-L-methionyl-tRNA(fMet) + (6S)-5,6,7,8-tetrahydrofolate + H(+). Its function is as follows. Attaches a formyl group to the free amino group of methionyl-tRNA(fMet). The formyl group appears to play a dual role in the initiator identity of N-formylmethionyl-tRNA by promoting its recognition by IF2 and preventing the misappropriation of this tRNA by the elongation apparatus. The sequence is that of Methionyl-tRNA formyltransferase from Salinispora arenicola (strain CNS-205).